A 104-amino-acid polypeptide reads, in one-letter code: Large ribosomal subunit protein bL28 (104 aa).

This sequence belongs to the bacterial ribosomal protein bL28 family.

This Wolbachia sp. subsp. Brugia malayi (strain TRS) protein is Large ribosomal subunit protein bL28.